The primary structure comprises 104 residues: L-rhamnose mutarotase (104 aa).

Residue Y18 participates in substrate binding. H22 functions as the Proton donor in the catalytic mechanism. Substrate is bound by residues Y41 and 76 to 77 (WW).

The protein belongs to the rhamnose mutarotase family. Homodimer.

It is found in the cytoplasm. It catalyses the reaction alpha-L-rhamnose = beta-L-rhamnose. It participates in carbohydrate metabolism; L-rhamnose metabolism. Functionally, involved in the anomeric conversion of L-rhamnose. The chain is L-rhamnose mutarotase from Escherichia coli O1:K1 / APEC.